A 214-amino-acid polypeptide reads, in one-letter code: Large ribosomal subunit protein uL3 (214 aa).

The disordered stretch occupies residues Gly-133–Ala-154.

Belongs to the universal ribosomal protein uL3 family. Part of the 50S ribosomal subunit. Forms a cluster with proteins L14 and L19.

Functionally, one of the primary rRNA binding proteins, it binds directly near the 3'-end of the 23S rRNA, where it nucleates assembly of the 50S subunit. This is Large ribosomal subunit protein uL3 from Streptomyces avermitilis (strain ATCC 31267 / DSM 46492 / JCM 5070 / NBRC 14893 / NCIMB 12804 / NRRL 8165 / MA-4680).